The primary structure comprises 310 residues: Aspartate carbamoyltransferase catalytic subunit (310 aa).

Carbamoyl phosphate-binding residues include arginine 58 and threonine 59. Lysine 86 contacts L-aspartate. Residues arginine 108, histidine 136, and glutamine 139 each coordinate carbamoyl phosphate. Arginine 169 and arginine 224 together coordinate L-aspartate. Residues glycine 265 and proline 266 each contribute to the carbamoyl phosphate site.

Belongs to the aspartate/ornithine carbamoyltransferase superfamily. ATCase family. Heterododecamer (2C3:3R2) of six catalytic PyrB chains organized as two trimers (C3), and six regulatory PyrI chains organized as three dimers (R2).

The catalysed reaction is carbamoyl phosphate + L-aspartate = N-carbamoyl-L-aspartate + phosphate + H(+). Its pathway is pyrimidine metabolism; UMP biosynthesis via de novo pathway; (S)-dihydroorotate from bicarbonate: step 2/3. Functionally, catalyzes the condensation of carbamoyl phosphate and aspartate to form carbamoyl aspartate and inorganic phosphate, the committed step in the de novo pyrimidine nucleotide biosynthesis pathway. The polypeptide is Aspartate carbamoyltransferase catalytic subunit (Citrifermentans bemidjiense (strain ATCC BAA-1014 / DSM 16622 / JCM 12645 / Bem) (Geobacter bemidjiensis)).